Here is a 380-residue protein sequence, read N- to C-terminus: Cytochrome b (380 aa).

4 helical membrane passes run 34 to 54, 78 to 99, 114 to 134, and 179 to 199; these read FGSL…LLAM, WLIR…YLHI, WNTG…GYVL, and FFAL…VHLT. Residues His84 and His98 each contribute to the heme b site. Residues His183 and His197 each contribute to the heme b site. His202 contributes to the a ubiquinone binding site. A run of 4 helical transmembrane segments spans residues 227–247, 289–309, 321–341, and 348–368; these read LKDI…ALFS, LGGV…PFLH, LSQL…WVGS, and FIII…ILFP.

This sequence belongs to the cytochrome b family. As to quaternary structure, the cytochrome bc1 complex contains 11 subunits: 3 respiratory subunits (MT-CYB, CYC1 and UQCRFS1), 2 core proteins (UQCRC1 and UQCRC2) and 6 low-molecular weight proteins (UQCRH/QCR6, UQCRB/QCR7, UQCRQ/QCR8, UQCR10/QCR9, UQCR11/QCR10 and a cleavage product of UQCRFS1). This cytochrome bc1 complex then forms a dimer. Heme b serves as cofactor.

The protein localises to the mitochondrion inner membrane. Its function is as follows. Component of the ubiquinol-cytochrome c reductase complex (complex III or cytochrome b-c1 complex) that is part of the mitochondrial respiratory chain. The b-c1 complex mediates electron transfer from ubiquinol to cytochrome c. Contributes to the generation of a proton gradient across the mitochondrial membrane that is then used for ATP synthesis. This chain is Cytochrome b (MT-CYB), found in Procellaria parkinsoni (Black petrel).